The primary structure comprises 649 residues: Sulfate transporter 1.1 (649 aa).

Residues Met-1 to Val-20 are disordered. At Met-1 to Arg-86 the chain is on the cytoplasmic side. A helical membrane pass occupies residues Gly-87–Ala-107. Topologically, residues Lys-108–Asn-111 are extracellular. Residues Val-112–Gly-132 traverse the membrane as a helical segment. The Cytoplasmic segment spans residues Ser-133 to Asp-136. The helical transmembrane segment at Ile-137–Ile-157 threads the bilayer. At Asp-158–Arg-168 the chain is on the extracellular side. The next 2 helical transmembrane spans lie at Leu-169–Leu-189 and Gly-190–Ile-210. At Thr-211–Asn-248 the chain is on the extracellular side. A helical transmembrane segment spans residues Trp-249–Gly-269. Residues Lys-270 to Leu-275 are Cytoplasmic-facing. Residues Phe-276 to Ile-296 traverse the membrane as a helical segment. Topologically, residues Phe-297 to Arg-334 are extracellular. Residues Ile-335–Ala-355 form a helical membrane-spanning segment. Residues Ala-356–Glu-367 are Cytoplasmic-facing. Residues Met-368–Gly-388 traverse the membrane as a helical segment. The Extracellular portion of the chain corresponds to Ser-389 to Ala-404. Residues Val-405–Phe-425 traverse the membrane as a helical segment. Residues Lys-426–Ala-431 are Cytoplasmic-facing. A helical transmembrane segment spans residues Ile-432 to Leu-452. Residues Ile-453 to Met-465 lie on the Extracellular side of the membrane. The chain crosses the membrane as a helical span at residues Gly-466–Ile-486. Topologically, residues Ser-487–Thr-649 are cytoplasmic. An STAS domain is found at Gln-517–Cys-640.

This sequence belongs to the SLC26A/SulP transporter (TC 2.A.53) family. In terms of assembly, interacts with OASA1 through its STAS domain. Expressed in lateral root cap, root hairs, epidermal and cortical cells of roots.

It is found in the membrane. Its function is as follows. High-affinity H(+)/sulfate cotransporter that mediates the uptake of the environmental sulfate by plant roots under low-sulfur conditions. Plays a central role in the regulation of sulfate assimilation. The chain is Sulfate transporter 1.1 (SULTR1;1) from Arabidopsis thaliana (Mouse-ear cress).